The sequence spans 328 residues: Malate dehydrogenase (328 aa).

13–19 (GGKGQIA) is an NAD(+) binding site. The substrate site is built by Arg94 and Arg100. Residues Asn107, Gln114, and 131-133 (VGN) contribute to the NAD(+) site. Asn133 and Arg164 together coordinate substrate. His189 acts as the Proton acceptor in catalysis.

It belongs to the LDH/MDH superfamily. MDH type 2 family.

The catalysed reaction is (S)-malate + NAD(+) = oxaloacetate + NADH + H(+). Functionally, catalyzes the reversible oxidation of malate to oxaloacetate. The protein is Malate dehydrogenase of Chlamydia pneumoniae (Chlamydophila pneumoniae).